The primary structure comprises 376 residues: Chaperone protein DnaJ (376 aa).

The 66-residue stretch at 5–70 (DYYEILGVSK…QKRAAYDQYG (66 aa)) folds into the J domain. The CR-type zinc-finger motif lies at 131–209 (GVTKEIRIPT…CHGHGRVERS (79 aa)). Positions 144, 147, 161, 164, 183, 186, 197, and 200 each coordinate Zn(2+). CXXCXGXG motif repeat units lie at residues 144–151 (CDVCHGSG), 161–168 (CPTCHGSG), 183–190 (CPHCQGRG), and 197–204 (CNKCHGHG).

It belongs to the DnaJ family. As to quaternary structure, homodimer. Zn(2+) is required as a cofactor.

The protein resides in the cytoplasm. Participates actively in the response to hyperosmotic and heat shock by preventing the aggregation of stress-denatured proteins and by disaggregating proteins, also in an autonomous, DnaK-independent fashion. Unfolded proteins bind initially to DnaJ; upon interaction with the DnaJ-bound protein, DnaK hydrolyzes its bound ATP, resulting in the formation of a stable complex. GrpE releases ADP from DnaK; ATP binding to DnaK triggers the release of the substrate protein, thus completing the reaction cycle. Several rounds of ATP-dependent interactions between DnaJ, DnaK and GrpE are required for fully efficient folding. Also involved, together with DnaK and GrpE, in the DNA replication of plasmids through activation of initiation proteins. This chain is Chaperone protein DnaJ, found in Shigella flexneri serotype 5b (strain 8401).